The primary structure comprises 137 residues: 15.7 kDa heat shock protein, peroxisomal (137 aa).

The sHSP domain maps to 15–134 (QEWSRSTALI…SSKVRNVNIT (120 aa)). Positions 135–137 (SKL) match the Microbody targeting signal motif.

Belongs to the small heat shock protein (HSP20) family. As to quaternary structure, may form oligomeric structures.

It localises to the peroxisome. Its function is as follows. Possesses chaperone activity. In Arabidopsis thaliana (Mouse-ear cress), this protein is 15.7 kDa heat shock protein, peroxisomal (HSP15.7).